The following is a 119-amino-acid chain: Chorion class CA protein ERA.1 (119 aa).

Positions 1–21 are cleaved as a signal peptide; sequence MSTFAVLLLCVQACLIQNVYS. Residues 22–55 form a left arm region; it reads QCLGRVGPGGPPLGPYGGPLGGPGYGPVGYGGCG. Residues 56-103 are central domain; it reads GYGGSGIGNVAVAGELPVAGSTGVMGQVPVIGAVEFAGPACAVGSVSI. The right arm stretch occupies residues 104 to 119; sequence SGACGPTCGCGGSPYY.

This sequence belongs to the chorion protein family.

Its function is as follows. This protein is one of many from the eggshell of the silk moth. This Bombyx mori (Silk moth) protein is Chorion class CA protein ERA.1 (ERA.1).